A 150-amino-acid polypeptide reads, in one-letter code: uncharacterized protein (150 aa).

This is an uncharacterized protein from Mycoplasma genitalium (strain ATCC 33530 / DSM 19775 / NCTC 10195 / G37) (Mycoplasmoides genitalium).